Here is a 433-residue protein sequence, read N- to C-terminus: Steroid hormone receptor ERR2 (433 aa).

A disordered region spans residues 1–41; the sequence is MSSEDRHLGSSCGSFIKTEPSSPSSGIDALSHHSPSGSSDA. The span at 32 to 41 shows a compositional bias: low complexity; sequence HHSPSGSSDA. Residues 93–211 are interaction with NANOG; sequence YMLNAIPKRL…SPPAKKPLTK (119 aa). Positions 100 to 186 form a DNA-binding region, nuclear receptor; that stretch reads KRLCLVCGDI…RVRGGRQKYK (87 aa). 2 consecutive NR C4-type zinc fingers follow at residues 103–123 and 139–163; these read CLVC…CEAC and CPAT…FMKC. An essential for ESRRB transcriptional activity and interaction with NCOA3 region spans residues 203-433; sequence PPAKKPLTKI…LFLEMLEAKV (231 aa). The 225-residue stretch at 208–432 folds into the NR LBD domain; sequence PLTKIVSYLL…KLFLEMLEAK (225 aa).

The protein belongs to the nuclear hormone receptor family. NR3 subfamily. In terms of assembly, binds DNA as a monomer. Interacts with NR0B1; represses ESRRB activity at the GATA6 promoter. Interacts with NANOG; reciprocally modulates their transcriptional activities and activates POU5F1 expression. Interacts with NCOA3; mediates the interaction between ESRRB and RNA polymerase II complexes and allows NCOA3 corecruitment to ESRRB, KLF4, NANOG, and SOX2 enhancer regions to trigger ESRRB-dependent gene activation involved in self-renewal and pluripotency. Interacts with KDM1A; co-occupes the core set of ESRRB targets including ELF5 and EOMES. Interacts with the multiprotein complex Integrator, at least composed of INTS1, INTS2, INTS3, INTS4, INTS5, INTS6, INTS7, INTS8, INTS9/RC74, INTS10, INTS11/CPSF3L and INTS12; ESRRB is probably not a core component of the integrator complex and associates to integrator via its interaction with INTS1 and INTS9; attracts the transcriptional machinery. Interacts with JARID2. Interacts with POU5F1; recruits ESRRB near the POU5F1-SOX2 element in the NANOG proximal promoter leading to activation of NANOG expression; the interaction is DNA independent. In terms of processing, acetylated by PCAF/KAT2 (in vitro).

It localises to the nucleus. The protein resides in the cytoplasm. It is found in the chromosome. Its function is as follows. Transcription factor that binds a canonical ESRRB recognition (ERRE) sequence 5'TCAAGGTCA-3' localized on promoter and enhancer of targets genes regulating their expression or their transcription activity. Plays a role, in a LIF independent manner, in maintainance of self-renewal and pluripotency of embryonic and trophoblast stem cells through different signaling pathways including FGF signaling pathway and Wnt signaling pathways. Involved in morula development (2-16 cells embryos) by acting as a regulator at the 8-cell stage. Upon FGF signaling pathway activation, interacts with KDM1A by directly binding to enhancer site of ELF5 and EOMES and activating their transcription leading to self-renewal of trophoblast stem cells. Also regulates expression of multiple rod-specific genes and is required for survival of this cell type. Plays a role as transcription factor activator of GATA6, NR0B1, POU5F1 and PERM1. Plays a role as transcription factor repressor of NFE2L2 transcriptional activity and ESR1 transcriptional activity. During mitosis remains bound to a subset of interphase target genes, including pluripotency regulators, through the canonical ESRRB recognition (ERRE) sequence, leading to their transcriptional activation in early G1 phase. Can coassemble on structured DNA elements with other transcription factors like SOX2, POU5F1, KDM1A and NCOA3 to trigger ESRRB-dependent gene activation. This mechanism, in the case of SOX2 corecruitment prevents the embryonic stem cells (ESCs) to epiblast stem cells (EpiSC) transition through positive regulation of NR0B1 that inhibits the EpiSC transcriptional program. Also plays a role inner ear development by controlling expression of ion channels and transporters and in early placentation. The protein is Steroid hormone receptor ERR2 of Rattus norvegicus (Rat).